Consider the following 426-residue polypeptide: Serine--tRNA ligase (426 aa).

233–235 (TAE) provides a ligand contact to L-serine. 264-266 (RAE) contacts ATP. Residue Glu-287 participates in L-serine binding. 351–354 (EISS) contributes to the ATP binding site. Ser-387 contacts L-serine.

It belongs to the class-II aminoacyl-tRNA synthetase family. Type-1 seryl-tRNA synthetase subfamily. As to quaternary structure, homodimer. The tRNA molecule binds across the dimer.

Its subcellular location is the cytoplasm. The catalysed reaction is tRNA(Ser) + L-serine + ATP = L-seryl-tRNA(Ser) + AMP + diphosphate + H(+). The enzyme catalyses tRNA(Sec) + L-serine + ATP = L-seryl-tRNA(Sec) + AMP + diphosphate + H(+). Its pathway is aminoacyl-tRNA biosynthesis; selenocysteinyl-tRNA(Sec) biosynthesis; L-seryl-tRNA(Sec) from L-serine and tRNA(Sec): step 1/1. Its function is as follows. Catalyzes the attachment of serine to tRNA(Ser). Is also able to aminoacylate tRNA(Sec) with serine, to form the misacylated tRNA L-seryl-tRNA(Sec), which will be further converted into selenocysteinyl-tRNA(Sec). In Clostridium kluyveri (strain NBRC 12016), this protein is Serine--tRNA ligase.